The chain runs to 196 residues: MTKILIVATSNAGKLREMQAYLANTDWELTLKPTELEVEETGDTFASNACLKASEVAKATGNWAIADDSGLQVDALNGLPGVYSARYGKTDGERISRLLKELGSEVNRQAQFVCVVAIASPDGAIALQAEGICRGEILHAPLGSGGFGYDPIFYVPEKQLTFAEMTPELKKSVSHRGKAFAALLPKMAAMLSSSAE.

9–14 (TSNAGK) serves as a coordination point for substrate. Mg(2+) is bound by residues Glu39 and Asp68. Catalysis depends on Asp68, which acts as the Proton acceptor. Substrate contacts are provided by residues Ser69, 147-150 (FGYD), Lys170, and 175-176 (HR).

Belongs to the HAM1 NTPase family. Homodimer. It depends on Mg(2+) as a cofactor.

The catalysed reaction is XTP + H2O = XMP + diphosphate + H(+). The enzyme catalyses dITP + H2O = dIMP + diphosphate + H(+). It catalyses the reaction ITP + H2O = IMP + diphosphate + H(+). Its function is as follows. Pyrophosphatase that catalyzes the hydrolysis of nucleoside triphosphates to their monophosphate derivatives, with a high preference for the non-canonical purine nucleotides XTP (xanthosine triphosphate), dITP (deoxyinosine triphosphate) and ITP. Seems to function as a house-cleaning enzyme that removes non-canonical purine nucleotides from the nucleotide pool, thus preventing their incorporation into DNA/RNA and avoiding chromosomal lesions. The polypeptide is dITP/XTP pyrophosphatase (Nostoc sp. (strain PCC 7120 / SAG 25.82 / UTEX 2576)).